Here is a 213-residue protein sequence, read N- to C-terminus: MSEAERKMQFLYALRSKGVTDKRVLSAMENIDRGPFIRGIFAERAYEDMPLPIACGQTISQPSVVGLMTQALKISPRDKVLEVGTGSGYQAAILSRLARRVYTLDRHSRLVREARTLFEEMNLTNITAITADGSYGLADQAPFDRILVTAAAEDPPSTLMEQLKVGGIMVIPVGQSDAVQHLIVVHKTEDGLEYDELRQVRFVPLLEGLGKDG.

Residue serine 60 is part of the active site.

This sequence belongs to the methyltransferase superfamily. L-isoaspartyl/D-aspartyl protein methyltransferase family.

Its subcellular location is the cytoplasm. The catalysed reaction is [protein]-L-isoaspartate + S-adenosyl-L-methionine = [protein]-L-isoaspartate alpha-methyl ester + S-adenosyl-L-homocysteine. Functionally, catalyzes the methyl esterification of L-isoaspartyl residues in peptides and proteins that result from spontaneous decomposition of normal L-aspartyl and L-asparaginyl residues. It plays a role in the repair and/or degradation of damaged proteins. The polypeptide is Protein-L-isoaspartate O-methyltransferase (Roseobacter denitrificans (strain ATCC 33942 / OCh 114) (Erythrobacter sp. (strain OCh 114))).